The primary structure comprises 164 residues: Crossover junction endodeoxyribonuclease RuvC (164 aa).

Catalysis depends on residues D7, E66, and D138. Mg(2+) is bound by residues D7, E66, and D138.

It belongs to the RuvC family. In terms of assembly, homodimer which binds Holliday junction (HJ) DNA. The HJ becomes 2-fold symmetrical on binding to RuvC with unstacked arms; it has a different conformation from HJ DNA in complex with RuvA. In the full resolvosome a probable DNA-RuvA(4)-RuvB(12)-RuvC(2) complex forms which resolves the HJ. Requires Mg(2+) as cofactor.

The protein localises to the cytoplasm. The enzyme catalyses Endonucleolytic cleavage at a junction such as a reciprocal single-stranded crossover between two homologous DNA duplexes (Holliday junction).. Functionally, the RuvA-RuvB-RuvC complex processes Holliday junction (HJ) DNA during genetic recombination and DNA repair. Endonuclease that resolves HJ intermediates. Cleaves cruciform DNA by making single-stranded nicks across the HJ at symmetrical positions within the homologous arms, yielding a 5'-phosphate and a 3'-hydroxyl group; requires a central core of homology in the junction. The consensus cleavage sequence is 5'-(A/T)TT(C/G)-3'. Cleavage occurs on the 3'-side of the TT dinucleotide at the point of strand exchange. HJ branch migration catalyzed by RuvA-RuvB allows RuvC to scan DNA until it finds its consensus sequence, where it cleaves and resolves the cruciform DNA. This chain is Crossover junction endodeoxyribonuclease RuvC, found in Paracoccus denitrificans (strain Pd 1222).